A 222-amino-acid polypeptide reads, in one-letter code: Millepora cytotoxin-1 (222 aa).

The first 20 residues, 1–20, serve as a signal peptide directing secretion; it reads MVTLYLHVPILLLVVITARA. A propeptide spanning residues 21 to 75 is cleaved from the precursor; the sequence is APKPDTHNPFDELSSVAEKQDLHYGDRSRKDPFIAQNDVGNNFRDGTQENLTKVR. 3 disulfide bridges follow: C89/C115, C142/C168, and C179/C222. Repeats lie at residues 100-109, 153-162, and 206-215; these read SIHDNHYEDR, SIHDNYYEDR, and SQHNNYYEDR.

It belongs to the dermatopontin family. In terms of processing, is not glycosylated.

The protein localises to the secreted. The protein resides in the nematocyst. Functionally, is potently cytotoxic (EC(50) value 79 ng/mL) towards L1210 mouse leukemia cells, has hemagglutination activity on sheep erythrocytes, and is lethal in crayfish. Has no phospholipase A2 activity. The sequence is that of Millepora cytotoxin-1 from Millepora dichotoma (Net fire coral).